The chain runs to 1262 residues: Histone-lysine N-methyltransferase eggless (1262 aa).

Residues 1–194 (MSGQPTAVDC…MEVDQDVEES (194 aa)) form a disordered region. Composition is skewed to basic and acidic residues over residues 26–41 (ASRE…KGEN), 50–61 (AAKDVEIEELTH), and 81–99 (APDE…KGEN). The span at 157-166 (SSISSPTSES) shows a compositional bias: low complexity. Over residues 167-179 (FPEKDEKTNKENE) the composition is skewed to basic and acidic residues. Ser-215 is modified (phosphoserine). Thr-217 carries the post-translational modification Phosphothreonine. The stretch at 353 to 420 (EKSDFSKNKL…LEKVQTTADK (68 aa)) forms a coiled coil. Tudor domains lie at 529 to 602 (RLTI…SEKV) and 629 to 686 (QCTR…RETQ). A disordered region spans residues 743–764 (SSAATPAGGRTNAGGVSTSNSA). The MBD domain occupies 818 to 884 (LDSYSPLAKP…DNFDFTPDLK (67 aa)). One can recognise a Pre-SET domain in the interval 946 to 1018 (LCCDCEDDCS…NCLNRVVQFS (73 aa)). Zn(2+) is bound by residues Cys-948, Cys-950, Cys-954, Cys-960, Cys-962, Cys-1000, Cys-1004, Cys-1006, and Cys-1010. In terms of domain architecture, SET spans 1021–1237 (MKLQVFKTSN…SGTELTWNYN (217 aa)). S-adenosyl-L-methionine contacts are provided by residues 1031 to 1033 (RGW), Asp-1069, and Tyr-1071. Basic and acidic residues predominate over residues 1086 to 1097 (EGYESEVDHSDP). A disordered region spans residues 1086–1148 (EGYESEVDHS…QSSELDSQER (63 aa)). Residues 1098 to 1113 (DAEEDNGGPDAEDDDD) are compositionally biased toward acidic residues. Residues 1129-1141 (RSGSTQNSSTQSS) are compositionally biased toward low complexity. Residues Arg-1191 and 1194–1195 (NH) contribute to the S-adenosyl-L-methionine site. Residues Cys-1197, Cys-1250, Cys-1252, and Cys-1257 each coordinate Zn(2+). One can recognise a Post-SET domain in the interval 1246-1262 (KVLYCQCGAPNCRLRLL).

This sequence belongs to the class V-like SAM-binding methyltransferase superfamily. Histone-lysine methyltransferase family. Suvar3-9 subfamily. As to expression, expressed in ovary (at protein level).

It localises to the nucleus. Its subcellular location is the chromosome. It carries out the reaction L-lysyl(9)-[histone H3] + 3 S-adenosyl-L-methionine = N(6),N(6),N(6)-trimethyl-L-lysyl(9)-[histone H3] + 3 S-adenosyl-L-homocysteine + 3 H(+). Its function is as follows. Histone methyltransferase that specifically trimethylates 'Lys-10' of histone H3 (H3K9me3) in ovary. H3K9me3 represents a specific tag for epigenetic transcriptional repression by recruiting Su(var)205/HP1 to methylated histones. Plays a central role during oogenesis. In Drosophila melanogaster (Fruit fly), this protein is Histone-lysine N-methyltransferase eggless (egg).